Here is a 129-residue protein sequence, read N- to C-terminus: DNA-directed RNA polymerase III subunit rpc9 (129 aa).

The protein belongs to the eukaryotic RPC9 RNA polymerase subunit family. As to quaternary structure, component of the RNA polymerase III (Pol III) complex.

It is found in the cytoplasm. Its subcellular location is the nucleus. In terms of biological role, DNA-dependent RNA polymerase catalyzes the transcription of DNA into RNA using the four ribonucleoside triphosphates as substrates. Specific peripheric component of RNA polymerase III which synthesizes small RNAs, such as 5S rRNA and tRNAs. The polypeptide is DNA-directed RNA polymerase III subunit rpc9 (rpc17) (Schizosaccharomyces pombe (strain 972 / ATCC 24843) (Fission yeast)).